A 309-amino-acid chain; its full sequence is Ribonuclease Z (309 aa).

Residues H63, H65, D67, H68, H145, D216, and H274 each coordinate Zn(2+). D67 functions as the Proton acceptor in the catalytic mechanism.

This sequence belongs to the RNase Z family. In terms of assembly, homodimer. Zn(2+) is required as a cofactor.

The enzyme catalyses Endonucleolytic cleavage of RNA, removing extra 3' nucleotides from tRNA precursor, generating 3' termini of tRNAs. A 3'-hydroxy group is left at the tRNA terminus and a 5'-phosphoryl group is left at the trailer molecule.. Its function is as follows. Zinc phosphodiesterase, which displays some tRNA 3'-processing endonuclease activity. Probably involved in tRNA maturation, by removing a 3'-trailer from precursor tRNA. This chain is Ribonuclease Z, found in Streptococcus pneumoniae serotype 19F (strain G54).